The chain runs to 331 residues: Serpentine receptor class alpha-1 (331 aa).

7 helical membrane-spanning segments follow: residues 22–42 (FAVFCSQLSIISTFILSVIAV), 57–77 (IILVFNFVYANIHQFMYAIIS), 104–124 (YTEVLYVGISGMIYSQTGILI), 143–163 (VGIIISTFVLIMSIATYQIII), 189–209 (FLFIALILTFVNLISSAAVMF), 238–258 (ICVVCMAQFVTMLVYSSGVLI), and 274–294 (LITWVYTVQYNALLFPLILIF).

It belongs to the nematode receptor-like protein sra family.

The protein localises to the membrane. In Caenorhabditis elegans, this protein is Serpentine receptor class alpha-1 (sra-1).